The following is a 762-amino-acid chain: Endonuclease MutS2 (762 aa).

Gly333–Thr340 is a binding site for ATP. The 75-residue stretch at Leu688–Leu762 folds into the Smr domain.

It belongs to the DNA mismatch repair MutS family. MutS2 subfamily. As to quaternary structure, homodimer. Binds to stalled ribosomes, contacting rRNA.

Its function is as follows. Endonuclease that is involved in the suppression of homologous recombination and thus may have a key role in the control of bacterial genetic diversity. Acts as a ribosome collision sensor, splitting the ribosome into its 2 subunits. Detects stalled/collided 70S ribosomes which it binds and splits by an ATP-hydrolysis driven conformational change. Acts upstream of the ribosome quality control system (RQC), a ribosome-associated complex that mediates the extraction of incompletely synthesized nascent chains from stalled ribosomes and their subsequent degradation. Probably generates substrates for RQC. In Helicobacter pylori (strain J99 / ATCC 700824) (Campylobacter pylori J99), this protein is Endonuclease MutS2.